Reading from the N-terminus, the 396-residue chain is S-adenosylmethionine synthase (396 aa).

Histidine 16 lines the ATP pocket. Aspartate 18 is a binding site for Mg(2+). Glutamate 44 lines the K(+) pocket. The L-methionine site is built by glutamate 57 and glutamine 100. The interval 100–110 (QSVDIAQGVDR) is flexible loop. ATP-binding positions include 165-167 (DAK), aspartate 240, 246-247 (RK), alanine 263, and lysine 267. An L-methionine-binding site is contributed by aspartate 240. Lysine 271 contacts L-methionine.

Belongs to the AdoMet synthase family. Homotetramer; dimer of dimers. Requires Mg(2+) as cofactor. K(+) serves as cofactor.

It is found in the cytoplasm. The enzyme catalyses L-methionine + ATP + H2O = S-adenosyl-L-methionine + phosphate + diphosphate. It functions in the pathway amino-acid biosynthesis; S-adenosyl-L-methionine biosynthesis; S-adenosyl-L-methionine from L-methionine: step 1/1. Catalyzes the formation of S-adenosylmethionine (AdoMet) from methionine and ATP. The overall synthetic reaction is composed of two sequential steps, AdoMet formation and the subsequent tripolyphosphate hydrolysis which occurs prior to release of AdoMet from the enzyme. In Pseudomonas entomophila (strain L48), this protein is S-adenosylmethionine synthase.